The sequence spans 420 residues: MGQSPSPRSPHGSPPTLSTLTLLLLLCGQAHSQCKILRCNAEYVSSTLSLRGGGSPDTPRGGGRGGLASGGLCRALRSYALCTRRTARTCRGDLAFHSAVHGIEDLMIQHNCSRQGPTAPPPARGPALPGAGPAPLTPDPCDYEARFSRLHGRAPGFLHCASFGDPHVRSFHNQFHTCRVQGAWPLLDNDFLFVQATSSPVSSGANATTIRKITIIFKNMQECIDQKVYQAEVDNLPAAFEDGSINGGDRPGGSSLSIQTANLGSHVEIRAAYIGTTIIIRQTAGQLSFSIRVAEDVARAFSAEQDLQLCVGGCPPSQRLSRSERNRRGAIAIDTARRLCKEGLPVEDAYFQSCVFDVSVSGDPNFTVAAQTALDDARIFLTDLENLHLFPSDAGPPLSPAICLVPLLSALFVLWLCFSK.

An N-terminal signal peptide occupies residues 1–32 (MGQSPSPRSPHGSPPTLSTLTLLLLLCGQAHS). Y43 is modified (phosphotyrosine). N111 is a glycosylation site (N-linked (GlcNAc...) asparagine). Positions 113–135 (SRQGPTAPPPARGPALPGAGPAP) are disordered. Residues 125-134 (GPALPGAGPA) show a composition bias toward low complexity. 2 cysteine pairs are disulfide-bonded: C141–C223 and C160–C310. N-linked (GlcNAc...) asparagine glycans are attached at residues N206 and N365. A lipid anchor (GPI-anchor amidated aspartate) is attached at D393. Positions 394–420 (AGPPLSPAICLVPLLSALFVLWLCFSK) are cleaved as a propeptide — removed in mature form.

This sequence belongs to the repulsive guidance molecule (RGM) family. As to quaternary structure, interacts with BMP2 and BMP4. Interacts with BMP6. Interacts with BMPR1B. Interacts with TMPRSS6. Autocatalytically cleaved at low pH; the two chains remain linked via two disulfide bonds. Also proteolytically processed by TMPRSS6, several fragments being released in the extracellular space; regulates HJV activity in BMP signaling and thefore iron homeostasis. Muscle cell lineage.

It is found in the cell membrane. Its function is as follows. Acts as a bone morphogenetic protein (BMP) coreceptor. Through enhancement of BMP signaling regulates hepcidin (HAMP) expression and regulates iron homeostasis. In Mus musculus (Mouse), this protein is Hemojuvelin.